The following is a 92-amino-acid chain: MADLEKINKIKVAEHIVECFGGIKNIKNIDKDLTRIKILVDSNSLVKRDDLTKNDNIIGTIKSNELTEVVINFEIIEDVYNKILYMMNEQKQ.

One can recognise a PTS EIIB type-1 domain in the interval Ile-10–Gln-92.

Its subcellular location is the cytoplasm. The phosphoenolpyruvate-dependent sugar phosphotransferase system (PTS), a major carbohydrate active -transport system, catalyzes the phosphorylation of incoming sugar substrates concomitant with their translocation across the cell membrane. The chain is Putative phosphotransferase enzyme IIB component BB_0367 from Borreliella burgdorferi (strain ATCC 35210 / DSM 4680 / CIP 102532 / B31) (Borrelia burgdorferi).